The sequence spans 237 residues: Uridylate kinase (237 aa).

Lysine 11–glycine 14 lines the ATP pocket. Glycine 53 contacts UMP. ATP contacts are provided by glycine 54 and arginine 58. UMP-binding positions include aspartate 73 and threonine 134–threonine 141. Residues threonine 161, tyrosine 167, and aspartate 170 each contribute to the ATP site.

Belongs to the UMP kinase family. In terms of assembly, homohexamer.

The protein resides in the cytoplasm. The enzyme catalyses UMP + ATP = UDP + ADP. It participates in pyrimidine metabolism; CTP biosynthesis via de novo pathway; UDP from UMP (UMPK route): step 1/1. With respect to regulation, inhibited by UTP. In terms of biological role, catalyzes the reversible phosphorylation of UMP to UDP. The sequence is that of Uridylate kinase from Burkholderia ambifaria (strain ATCC BAA-244 / DSM 16087 / CCUG 44356 / LMG 19182 / AMMD) (Burkholderia cepacia (strain AMMD)).